Consider the following 249-residue polypeptide: tRNA (guanine-N(1)-)-methyltransferase (249 aa).

S-adenosyl-L-methionine is bound by residues Gly113 and 133–138; that span reads IGDFVL.

It belongs to the RNA methyltransferase TrmD family. In terms of assembly, homodimer.

It localises to the cytoplasm. The enzyme catalyses guanosine(37) in tRNA + S-adenosyl-L-methionine = N(1)-methylguanosine(37) in tRNA + S-adenosyl-L-homocysteine + H(+). Specifically methylates guanosine-37 in various tRNAs. This chain is tRNA (guanine-N(1)-)-methyltransferase, found in Photobacterium profundum (strain SS9).